The following is a 235-amino-acid chain: tRNA (guanine-N(1)-)-methyltransferase (235 aa).

Residues glycine 114 and 134–139 (IGDYIL) contribute to the S-adenosyl-L-methionine site.

The protein belongs to the RNA methyltransferase TrmD family. Homodimer.

The protein localises to the cytoplasm. The enzyme catalyses guanosine(37) in tRNA + S-adenosyl-L-methionine = N(1)-methylguanosine(37) in tRNA + S-adenosyl-L-homocysteine + H(+). Specifically methylates guanosine-37 in various tRNAs. The sequence is that of tRNA (guanine-N(1)-)-methyltransferase from Ehrlichia ruminantium (strain Gardel).